A 330-amino-acid chain; its full sequence is Fructose-1,6-bisphosphatase class 1 (330 aa).

Mg(2+)-binding residues include glutamate 84, aspartate 103, leucine 105, and aspartate 106. Substrate contacts are provided by residues 106–109, asparagine 196, and lysine 262; that span reads DGSS. Glutamate 268 is a Mg(2+) binding site.

It belongs to the FBPase class 1 family. In terms of assembly, homotetramer. It depends on Mg(2+) as a cofactor.

The protein localises to the cytoplasm. The enzyme catalyses beta-D-fructose 1,6-bisphosphate + H2O = beta-D-fructose 6-phosphate + phosphate. Its pathway is carbohydrate biosynthesis; gluconeogenesis. The protein is Fructose-1,6-bisphosphatase class 1 of Shewanella sp. (strain MR-7).